The chain runs to 209 residues: Uracil phosphoribosyltransferase (209 aa).

Residues R79, R104, and 131–139 (DPMLATGGS) contribute to the 5-phospho-alpha-D-ribose 1-diphosphate site. Uracil contacts are provided by residues I194 and 199 to 201 (GDA). D200 serves as a coordination point for 5-phospho-alpha-D-ribose 1-diphosphate.

This sequence belongs to the UPRTase family. Mg(2+) serves as cofactor.

It catalyses the reaction UMP + diphosphate = 5-phospho-alpha-D-ribose 1-diphosphate + uracil. Its pathway is pyrimidine metabolism; UMP biosynthesis via salvage pathway; UMP from uracil: step 1/1. Allosterically activated by GTP. Functionally, catalyzes the conversion of uracil and 5-phospho-alpha-D-ribose 1-diphosphate (PRPP) to UMP and diphosphate. This chain is Uracil phosphoribosyltransferase, found in Streptococcus pyogenes serotype M1.